The sequence spans 462 residues: ATP synthase subunit beta (462 aa).

152–159 contacts ATP; that stretch reads GGAGVGKT.

It belongs to the ATPase alpha/beta chains family. In terms of assembly, F-type ATPases have 2 components, CF(1) - the catalytic core - and CF(0) - the membrane proton channel. CF(1) has five subunits: alpha(3), beta(3), gamma(1), delta(1), epsilon(1). CF(0) has three main subunits: a(1), b(2) and c(9-12). The alpha and beta chains form an alternating ring which encloses part of the gamma chain. CF(1) is attached to CF(0) by a central stalk formed by the gamma and epsilon chains, while a peripheral stalk is formed by the delta and b chains.

The protein localises to the cell inner membrane. The enzyme catalyses ATP + H2O + 4 H(+)(in) = ADP + phosphate + 5 H(+)(out). Its function is as follows. Produces ATP from ADP in the presence of a proton gradient across the membrane. The catalytic sites are hosted primarily by the beta subunits. The polypeptide is ATP synthase subunit beta (Aeromonas hydrophila subsp. hydrophila (strain ATCC 7966 / DSM 30187 / BCRC 13018 / CCUG 14551 / JCM 1027 / KCTC 2358 / NCIMB 9240 / NCTC 8049)).